Consider the following 87-residue polypeptide: Cell division topological specificity factor (87 aa).

The protein belongs to the MinE family.

Prevents the cell division inhibition by proteins MinC and MinD at internal division sites while permitting inhibition at polar sites. This ensures cell division at the proper site by restricting the formation of a division septum at the midpoint of the long axis of the cell. This is Cell division topological specificity factor from Delftia acidovorans (strain DSM 14801 / SPH-1).